We begin with the raw amino-acid sequence, 329 residues long: Probable endo-beta-1,4-glucanase B (329 aa).

The signal sequence occupies residues 1–18; it reads MKFGSIVLIAAAAGSAVA. Asn33 and Asn96 each carry an N-linked (GlcNAc...) asparagine glycan. The active-site Proton donor is the Glu156. Glu263 serves as the catalytic Nucleophile.

This sequence belongs to the glycosyl hydrolase 5 (cellulase A) family.

It localises to the secreted. The catalysed reaction is Endohydrolysis of (1-&gt;4)-beta-D-glucosidic linkages in cellulose, lichenin and cereal beta-D-glucans.. In terms of biological role, has endoglucanase activity on substrates containing beta-1,4 glycosidic bonds, like in carboxymethylcellulose (CMC), hydroxyethylcellulose (HEC) and beta-glucan. Involved in the degradation of complex natural cellulosic substrates. This is Probable endo-beta-1,4-glucanase B (eglB) from Neosartorya fischeri (strain ATCC 1020 / DSM 3700 / CBS 544.65 / FGSC A1164 / JCM 1740 / NRRL 181 / WB 181) (Aspergillus fischerianus).